A 315-amino-acid polypeptide reads, in one-letter code: DNA-directed RNA polymerase subunit alpha (315 aa).

Residues 1–228 (MIEIEKPKVD…EHLNLFIDLT (228 aa)) form an alpha N-terminal domain (alpha-NTD) region. Residues 245–315 (KEKVLEMTIE…LGLGLKPSEE (71 aa)) are alpha C-terminal domain (alpha-CTD).

The protein belongs to the RNA polymerase alpha chain family. In terms of assembly, homodimer. The RNAP catalytic core consists of 2 alpha, 1 beta, 1 beta' and 1 omega subunit. When a sigma factor is associated with the core the holoenzyme is formed, which can initiate transcription.

It carries out the reaction RNA(n) + a ribonucleoside 5'-triphosphate = RNA(n+1) + diphosphate. Its function is as follows. DNA-dependent RNA polymerase catalyzes the transcription of DNA into RNA using the four ribonucleoside triphosphates as substrates. This is DNA-directed RNA polymerase subunit alpha from Clostridioides difficile (strain 630) (Peptoclostridium difficile).